The sequence spans 194 residues: Peptidyl-tRNA hydrolase (194 aa).

Tyrosine 17 serves as a coordination point for tRNA. The Proton acceptor role is filled by histidine 22. Residues phenylalanine 68, asparagine 70, and asparagine 116 each contribute to the tRNA site.

It belongs to the PTH family. As to quaternary structure, monomer.

It is found in the cytoplasm. The catalysed reaction is an N-acyl-L-alpha-aminoacyl-tRNA + H2O = an N-acyl-L-amino acid + a tRNA + H(+). Hydrolyzes ribosome-free peptidyl-tRNAs (with 1 or more amino acids incorporated), which drop off the ribosome during protein synthesis, or as a result of ribosome stalling. In terms of biological role, catalyzes the release of premature peptidyl moieties from peptidyl-tRNA molecules trapped in stalled 50S ribosomal subunits, and thus maintains levels of free tRNAs and 50S ribosomes. This chain is Peptidyl-tRNA hydrolase, found in Histophilus somni (strain 2336) (Haemophilus somnus).